A 211-amino-acid polypeptide reads, in one-letter code: Histidine biosynthesis bifunctional protein HisIE (211 aa).

The phosphoribosyl-AMP cyclohydrolase stretch occupies residues 1-122 (MSVKAAEVSS…DPQEESQMVW (122 aa)). The phosphoribosyl-ATP pyrophosphohydrolase stretch occupies residues 123–211 (LHQLEQLLAA…VINKLKERHK (89 aa)).

In the N-terminal section; belongs to the PRA-CH family. It in the C-terminal section; belongs to the PRA-PH family.

It localises to the cytoplasm. It carries out the reaction 1-(5-phospho-beta-D-ribosyl)-ATP + H2O = 1-(5-phospho-beta-D-ribosyl)-5'-AMP + diphosphate + H(+). The catalysed reaction is 1-(5-phospho-beta-D-ribosyl)-5'-AMP + H2O = 1-(5-phospho-beta-D-ribosyl)-5-[(5-phospho-beta-D-ribosylamino)methylideneamino]imidazole-4-carboxamide. Its pathway is amino-acid biosynthesis; L-histidine biosynthesis; L-histidine from 5-phospho-alpha-D-ribose 1-diphosphate: step 2/9. It functions in the pathway amino-acid biosynthesis; L-histidine biosynthesis; L-histidine from 5-phospho-alpha-D-ribose 1-diphosphate: step 3/9. The sequence is that of Histidine biosynthesis bifunctional protein HisIE from Vibrio vulnificus (strain YJ016).